The chain runs to 579 residues: Multidrug resistance-like ATP-binding protein MdlA (579 aa).

Residues 18-303 enclose the ABC transmembrane type-1 domain; sequence YTIAIFLLIS…FAWMFNIIER (286 aa). Helical transmembrane passes span 20-40, 53-73, 134-154, 155-175, 247-267, and 281-301; these read IAIF…KLIG, KAPI…IYIL, GVLT…VMIT, QISW…AIII, IIHL…SYMI, and ILYL…FNII. Residues 338-572 enclose the ABC transporter domain; sequence VKINYFKYSK…LKQWYGKTYL (235 aa). 370–377 contacts ATP; the sequence is GPTGSGKS.

Belongs to the ABC transporter superfamily. Drug exporter-2 (TC 3.A.1.117) family.

The protein localises to the cell membrane. The enzyme catalyses ATP + H2O + xenobioticSide 1 = ADP + phosphate + xenobioticSide 2.. In Buchnera aphidicola subsp. Baizongia pistaciae (strain Bp), this protein is Multidrug resistance-like ATP-binding protein MdlA (mdlA).